A 203-amino-acid chain; its full sequence is GTP-binding protein YPTM2 (203 aa).

Residues 15-23, 33-40, 63-67, 121-124, and 151-153 each bind GTP; these read GDSGVGKSC, YLDSYIST, DTAGQ, NKSD, and SAK. Residues 37-45 carry the Effector region motif; the sequence is YISTIGVDF. 2 S-geranylgeranyl cysteine lipidation sites follow: Cys200 and Cys201.

The protein belongs to the small GTPase superfamily. Rab family. Its expression is weak in stems, higher in roots, leaves and coleoptiles, but highest in flowers.

Its subcellular location is the cell membrane. In terms of biological role, protein transport. Probably involved in vesicular traffic. This chain is GTP-binding protein YPTM2 (YPTM2), found in Zea mays (Maize).